The following is a 243-amino-acid chain: Orotidine 5'-phosphate decarboxylase (243 aa).

Residues D12, K34, 61 to 70 (DLKFHDIPNT), T125, R187, Q196, G216, and R217 contribute to the substrate site. K63 functions as the Proton donor in the catalytic mechanism.

It belongs to the OMP decarboxylase family. Type 1 subfamily. In terms of assembly, homodimer.

It carries out the reaction orotidine 5'-phosphate + H(+) = UMP + CO2. It participates in pyrimidine metabolism; UMP biosynthesis via de novo pathway; UMP from orotate: step 2/2. Its function is as follows. Catalyzes the decarboxylation of orotidine 5'-monophosphate (OMP) to uridine 5'-monophosphate (UMP). In Heliobacterium modesticaldum (strain ATCC 51547 / Ice1), this protein is Orotidine 5'-phosphate decarboxylase.